The following is a 254-amino-acid chain: Pectate lyase E (254 aa).

Positions methionine 1–alanine 17 are cleaved as a signal peptide. Positions threonine 227–cysteine 254 are disordered. Residue asparagine 229 is glycosylated (N-linked (GlcNAc...) asparagine). The span at serine 239–cysteine 254 shows a compositional bias: low complexity.

This sequence belongs to the polysaccharide lyase 3 family. Ca(2+) is required as a cofactor.

It is found in the secreted. It catalyses the reaction Eliminative cleavage of (1-&gt;4)-alpha-D-galacturonan to give oligosaccharides with 4-deoxy-alpha-D-galact-4-enuronosyl groups at their non-reducing ends.. Functionally, pectinolytic enzyme consist of four classes of enzymes: pectin lyase, polygalacturonase, pectin methylesterase and rhamnogalacturonase. Among pectinolytic enzymes, pectin lyase is the most important in depolymerization of pectin, since it cleaves internal glycosidic bonds of highly methylated pectins. Favors pectate, the anion, over pectin, the methyl ester. The protein is Pectate lyase E (plyE) of Emericella nidulans (strain FGSC A4 / ATCC 38163 / CBS 112.46 / NRRL 194 / M139) (Aspergillus nidulans).